A 146-amino-acid polypeptide reads, in one-letter code: Ribosome-binding factor A (146 aa).

Residues 113–146 form a disordered region; the sequence is IRDEREAQEPAQDPAQDSSQDASVEASDAPDKAE.

It belongs to the RbfA family. As to quaternary structure, monomer. Binds 30S ribosomal subunits, but not 50S ribosomal subunits or 70S ribosomes.

It is found in the cytoplasm. Functionally, one of several proteins that assist in the late maturation steps of the functional core of the 30S ribosomal subunit. Associates with free 30S ribosomal subunits (but not with 30S subunits that are part of 70S ribosomes or polysomes). Required for efficient processing of 16S rRNA. May interact with the 5'-terminal helix region of 16S rRNA. This chain is Ribosome-binding factor A, found in Gemmatimonas aurantiaca (strain DSM 14586 / JCM 11422 / NBRC 100505 / T-27).